A 448-amino-acid chain; its full sequence is Phosphoglucosamine mutase (448 aa).

Ser102 acts as the Phosphoserine intermediate in catalysis. Mg(2+) is bound by residues Ser102, Asp243, Asp245, and Asp247. Phosphoserine is present on Ser102.

This sequence belongs to the phosphohexose mutase family. Mg(2+) serves as cofactor. Post-translationally, activated by phosphorylation.

It catalyses the reaction alpha-D-glucosamine 1-phosphate = D-glucosamine 6-phosphate. Its function is as follows. Catalyzes the conversion of glucosamine-6-phosphate to glucosamine-1-phosphate. In Parvibaculum lavamentivorans (strain DS-1 / DSM 13023 / NCIMB 13966), this protein is Phosphoglucosamine mutase.